The primary structure comprises 445 residues: 3-phosphoshikimate 1-carboxyvinyltransferase (445 aa).

A disordered region spans residues 1–24 (MEHAATLPQTSRRPATPLTGTITV). Residues 7-22 (LPQTSRRPATPLTGTI) are compositionally biased toward polar residues. 3-phosphoshikimate-binding residues include Lys-28, Ser-29, and Arg-33. Lys-28 contacts phosphoenolpyruvate. Residues Gly-101 and Arg-129 each contribute to the phosphoenolpyruvate site. 3-phosphoshikimate is bound by residues Ser-174, Gln-176, Asp-326, and Lys-353. Residue Gln-176 participates in phosphoenolpyruvate binding. The Proton acceptor role is filled by Asp-326. Phosphoenolpyruvate-binding residues include Arg-357 and Arg-399.

Belongs to the EPSP synthase family. As to quaternary structure, monomer.

The protein resides in the cytoplasm. It carries out the reaction 3-phosphoshikimate + phosphoenolpyruvate = 5-O-(1-carboxyvinyl)-3-phosphoshikimate + phosphate. It participates in metabolic intermediate biosynthesis; chorismate biosynthesis; chorismate from D-erythrose 4-phosphate and phosphoenolpyruvate: step 6/7. Its function is as follows. Catalyzes the transfer of the enolpyruvyl moiety of phosphoenolpyruvate (PEP) to the 5-hydroxyl of shikimate-3-phosphate (S3P) to produce enolpyruvyl shikimate-3-phosphate and inorganic phosphate. The chain is 3-phosphoshikimate 1-carboxyvinyltransferase from Acidiphilium cryptum (strain JF-5).